We begin with the raw amino-acid sequence, 183 residues long: Thioredoxin-like protein CITRX, chloroplastic (183 aa).

The N-terminal 81 residues, 1–81 (MALVQSRTFP…REDYLVKKLS (81 aa)), are a transit peptide targeting the chloroplast. The Thioredoxin domain occupies 82 to 183 (AQELQELVKG…MMHDIIDNEM (102 aa)). Residues cysteine 106 and cysteine 109 each act as nucleophile in the active site. The cysteines at positions 106 and 109 are disulfide-linked.

The protein belongs to the thioredoxin family. Plant CITRX-type subfamily. In terms of assembly, interacts with FLN1 and FLN2. Interacts with MRL7.

The protein resides in the plastid. Its subcellular location is the chloroplast. Its function is as follows. Thiol-disulfide oxidoreductase that plays a role in proper chloroplast development, most likely through regulating plastid-encoded polymerase (PEP) dependent chloroplast transcription. Acts as a component of the transcriptionally active plastid chromosome that is required for plastid gene expression. In Arabidopsis thaliana (Mouse-ear cress), this protein is Thioredoxin-like protein CITRX, chloroplastic.